Consider the following 325-residue polypeptide: Neural proliferation differentiation and control protein 1 (325 aa).

An N-terminal signal peptide occupies residues 1–34 (MATPLPPPSPRHLRLLRLLLSGLVLGAALRGAAA). Residues 138 to 175 (QGLELGLPSTPGTPTPTPHTSLGSPVSSDPVHMSPLEP) are disordered. The helical transmembrane segment at 182–202 (GLALVLILAFCVAGAAALSVA) threads the bilayer. Ser229 carries the phosphoserine modification. The segment at 266-290 (EPPKELDTASSDEENEDGDFTVYEC) is disordered. Residues 275-284 (SSDEENEDGD) are compositionally biased toward acidic residues.

It belongs to the NPDC1/cab-1 family. Strongly expressed in adult brain; especially in hippocampus, frontal lobe and temporal lobe.

The protein localises to the membrane. Its function is as follows. Suppresses oncogenic transformation in neural and non-neural cells and down-regulates neural cell proliferation. Might be involved in transcriptional regulation. The sequence is that of Neural proliferation differentiation and control protein 1 (NPDC1) from Homo sapiens (Human).